The sequence spans 445 residues: Glutamate--tRNA ligase 1 (445 aa).

The 'HIGH' region motif lies at 8-18 (PSPTGKLHVGN). Positions 239-243 (KLSKR) match the 'KMSKS' region motif. Lys-242 contributes to the ATP binding site.

The protein belongs to the class-I aminoacyl-tRNA synthetase family. Glutamate--tRNA ligase type 1 subfamily. Monomer.

Its subcellular location is the cytoplasm. It carries out the reaction tRNA(Glu) + L-glutamate + ATP = L-glutamyl-tRNA(Glu) + AMP + diphosphate. Functionally, catalyzes the attachment of glutamate to tRNA(Glu) in a two-step reaction: glutamate is first activated by ATP to form Glu-AMP and then transferred to the acceptor end of tRNA(Glu). This Maricaulis maris (strain MCS10) (Caulobacter maris) protein is Glutamate--tRNA ligase 1.